Here is a 768-residue protein sequence, read N- to C-terminus: Post-transcriptional regulator MKT1 (768 aa).

The protein belongs to the XPG/RAD2 endonuclease family. In terms of assembly, interacts with PBP1.

The protein localises to the cytoplasm. Its subcellular location is the cytosol. Functionally, involved in 3'-UTR mediated RNA regulation. Complexes with PBP1 to promote mRNA interactions with poly(A)-binding protein. In Cryptococcus neoformans var. grubii serotype A (strain H99 / ATCC 208821 / CBS 10515 / FGSC 9487) (Filobasidiella neoformans var. grubii), this protein is Post-transcriptional regulator MKT1.